The following is a 301-amino-acid chain: Light-independent protochlorophyllide reductase iron-sulfur ATP-binding protein (301 aa).

Positions 1–26 are disordered; it reads MSNGSVPVSGIGGRGDGEGSSQVHME. ATP contacts are provided by residues 44–49 and K73; that span reads GIGKST. S48 is a Mg(2+) binding site. [4Fe-4S] cluster-binding residues include C129 and C163. 214 to 215 lines the ATP pocket; that stretch reads NR.

It belongs to the NifH/BchL/ChlL family. As to quaternary structure, homodimer. Protochlorophyllide reductase is composed of three subunits; BchL, BchN and BchB. The cofactor is [4Fe-4S] cluster.

It carries out the reaction chlorophyllide a + oxidized 2[4Fe-4S]-[ferredoxin] + 2 ADP + 2 phosphate = protochlorophyllide a + reduced 2[4Fe-4S]-[ferredoxin] + 2 ATP + 2 H2O. Its pathway is porphyrin-containing compound metabolism; bacteriochlorophyll biosynthesis (light-independent). Component of the dark-operative protochlorophyllide reductase (DPOR) that uses Mg-ATP and reduced ferredoxin to reduce ring D of protochlorophyllide (Pchlide) to form chlorophyllide a (Chlide). This reaction is light-independent. The L component serves as a unique electron donor to the NB-component of the complex, and binds Mg-ATP. The chain is Light-independent protochlorophyllide reductase iron-sulfur ATP-binding protein from Halorhodospira halophila (strain DSM 244 / SL1) (Ectothiorhodospira halophila (strain DSM 244 / SL1)).